Here is a 166-residue protein sequence, read N- to C-terminus: Methylmalonyl-CoA epimerase, mitochondrial (166 aa).

Residues M1 to G23 constitute a mitochondrion transit peptide. In terms of domain architecture, VOC spans K37–K166. Residues H40, H112, and E162 each contribute to the Co(2+) site.

The protein belongs to the methylmalonyl-CoA epimerase family.

The protein localises to the mitochondrion. The catalysed reaction is (R)-methylmalonyl-CoA = (S)-methylmalonyl-CoA. Functionally, methylmalonyl-CoA epimerase involved in propionyl-CoA metabolism. The chain is Methylmalonyl-CoA epimerase, mitochondrial (mcee) from Dictyostelium discoideum (Social amoeba).